A 387-amino-acid chain; its full sequence is Phosphoglycerate kinase (387 aa).

Residues 21-23 (DLN), Arg-36, 59-62 (HLGR), Arg-113, and Arg-146 each bind substrate. ATP is bound by residues Lys-197, Glu-314, and 340 to 343 (GGDT).

This sequence belongs to the phosphoglycerate kinase family. Monomer.

It is found in the cytoplasm. The enzyme catalyses (2R)-3-phosphoglycerate + ATP = (2R)-3-phospho-glyceroyl phosphate + ADP. It functions in the pathway carbohydrate degradation; glycolysis; pyruvate from D-glyceraldehyde 3-phosphate: step 2/5. The chain is Phosphoglycerate kinase from Pseudomonas paraeruginosa (strain DSM 24068 / PA7) (Pseudomonas aeruginosa (strain PA7)).